A 297-amino-acid polypeptide reads, in one-letter code: Nitrogenase iron protein (297 aa).

11–18 provides a ligand contact to ATP; sequence GKGGIGKS. C99 provides a ligand contact to [4Fe-4S] cluster. R102 is modified (ADP-ribosylarginine; by dinitrogenase reductase ADP-ribosyltransferase). C133 provides a ligand contact to [4Fe-4S] cluster.

It belongs to the NifH/BchL/ChlL family. Homodimer. It depends on [4Fe-4S] cluster as a cofactor. The reversible ADP-ribosylation of Arg-102 inactivates the nitrogenase reductase and regulates nitrogenase activity.

It carries out the reaction N2 + 8 reduced [2Fe-2S]-[ferredoxin] + 16 ATP + 16 H2O = H2 + 8 oxidized [2Fe-2S]-[ferredoxin] + 2 NH4(+) + 16 ADP + 16 phosphate + 6 H(+). In terms of biological role, the key enzymatic reactions in nitrogen fixation are catalyzed by the nitrogenase complex, which has 2 components: the iron protein and the molybdenum-iron protein. This is Nitrogenase iron protein (nifH) from Rhizobium meliloti (strain 1021) (Ensifer meliloti).